A 379-amino-acid polypeptide reads, in one-letter code: Anhydro-N-acetylmuramic acid kinase (379 aa).

9–16 serves as a coordination point for ATP; the sequence is GTSADGVD.

It belongs to the anhydro-N-acetylmuramic acid kinase family.

The catalysed reaction is 1,6-anhydro-N-acetyl-beta-muramate + ATP + H2O = N-acetyl-D-muramate 6-phosphate + ADP + H(+). It functions in the pathway amino-sugar metabolism; 1,6-anhydro-N-acetylmuramate degradation. The protein operates within cell wall biogenesis; peptidoglycan recycling. Its function is as follows. Catalyzes the specific phosphorylation of 1,6-anhydro-N-acetylmuramic acid (anhMurNAc) with the simultaneous cleavage of the 1,6-anhydro ring, generating MurNAc-6-P. Is required for the utilization of anhMurNAc either imported from the medium or derived from its own cell wall murein, and thus plays a role in cell wall recycling. This chain is Anhydro-N-acetylmuramic acid kinase, found in Prochlorococcus marinus (strain MIT 9211).